The sequence spans 272 residues: Undecaprenyl-diphosphatase (272 aa).

7 helical membrane passes run 39-59 (SGLT…FVYF), 87-107 (WMIV…EQPI), 113-133 (SSPL…GLTD), 145-165 (ITLG…VPGV), 188-208 (FSFL…GLHL), 220-240 (PMLV…AFLL), and 251-271 (FVWY…VGLL).

It belongs to the UppP family.

The protein localises to the cell inner membrane. It catalyses the reaction di-trans,octa-cis-undecaprenyl diphosphate + H2O = di-trans,octa-cis-undecaprenyl phosphate + phosphate + H(+). In terms of biological role, catalyzes the dephosphorylation of undecaprenyl diphosphate (UPP). Confers resistance to bacitracin. The protein is Undecaprenyl-diphosphatase of Trichlorobacter lovleyi (strain ATCC BAA-1151 / DSM 17278 / SZ) (Geobacter lovleyi).